We begin with the raw amino-acid sequence, 152 residues long: SsrA-binding protein (152 aa).

The protein belongs to the SmpB family.

It localises to the cytoplasm. In terms of biological role, required for rescue of stalled ribosomes mediated by trans-translation. Binds to transfer-messenger RNA (tmRNA), required for stable association of tmRNA with ribosomes. tmRNA and SmpB together mimic tRNA shape, replacing the anticodon stem-loop with SmpB. tmRNA is encoded by the ssrA gene; the 2 termini fold to resemble tRNA(Ala) and it encodes a 'tag peptide', a short internal open reading frame. During trans-translation Ala-aminoacylated tmRNA acts like a tRNA, entering the A-site of stalled ribosomes, displacing the stalled mRNA. The ribosome then switches to translate the ORF on the tmRNA; the nascent peptide is terminated with the 'tag peptide' encoded by the tmRNA and targeted for degradation. The ribosome is freed to recommence translation, which seems to be the essential function of trans-translation. In Rickettsia akari (strain Hartford), this protein is SsrA-binding protein.